A 217-amino-acid chain; its full sequence is uncharacterized protein (217 aa).

This sequence to M.tuberculosis Rv2926c.

This is an uncharacterized protein from Mycobacterium leprae (strain TN).